The sequence spans 1148 residues: Putative ATP-dependent RNA helicase rha-2 (1148 aa).

Positions 1–10 (MGKRKTKEDN) are enriched in basic and acidic residues. Disordered regions lie at residues 1-51 (MGKR…FAKE) and 101-163 (STKL…DAGN). Acidic residues predominate over residues 138–160 (PTDDESSSEEEEEEEEGDNDIED). The 167-residue stretch at 246–412 (VEAINENLVT…KLFPLLTPKV (167 aa)) folds into the Helicase ATP-binding domain. ATP is bound at residue 259–266 (GETGSGKT). Positions 355–358 (DEAH) match the DEAH box motif. A Helicase C-terminal domain is found at 463 to 703 (EVKQLITKLK…QLVLHLKSMN (241 aa)).

The protein belongs to the DEAD box helicase family. DEAH subfamily.

It catalyses the reaction ATP + H2O = ADP + phosphate + H(+). Functionally, probable ATP-binding RNA helicase. In Caenorhabditis elegans, this protein is Putative ATP-dependent RNA helicase rha-2 (rha-2).